A 432-amino-acid chain; its full sequence is Polyadenylate-binding protein RBP47C (432 aa).

A disordered region spans residues Met-1 to Pro-55. Residues Gln-22 to Gln-32 are compositionally biased toward pro residues. 2 RRM domains span residues Lys-101–Phe-183 and Leu-197–Pro-276. The interval Ile-271–Thr-293 is disordered. Residues Arg-277–Gly-286 show a composition bias toward polar residues. In terms of domain architecture, RRM 3 spans Thr-304–Asn-376.

Belongs to the polyadenylate-binding RBP47 family. As to quaternary structure, interacts with the poly(A) tail of mRNA in nucleus. In terms of tissue distribution, expressed in leaves, stems, flowers, and seedlings.

It localises to the nucleus. The protein resides in the cytoplasmic granule. Its function is as follows. Heterogeneous nuclear ribonucleoprotein (hnRNP)-protein binding the poly(A) tail of mRNA and probably involved in some steps of pre-mRNA maturation. The protein is Polyadenylate-binding protein RBP47C (RBP47C) of Arabidopsis thaliana (Mouse-ear cress).